The chain runs to 304 residues: MSRSQNLRHNVINQVIDDMARGHIPSPLPSQSALAEMYNISRTTVRHILSHLRECGVLTQVGNDYVIARKPDHDDGFACTTASMSEQNKVFEQAFFTMINQRQLRPGETFSELQLARAAGVSPVVVREYLLKFGRYNLIHSEKRGQWSMKQFDQSYAEQLFELREMLETHSLQHFLNLPDHDPRWLQAKTMLERHRLLRDNIGNSFRMFSQLDRDFHSLLLSAADNIFFDQSLEIISVIFHFHYQWDESDLKQRNIIAVDEHMTILSALICRSDLDATLALRNHLNSAKQSMIRSINENTRYAH.

The region spanning 1–70 (MSRSQNLRHN…VGNDYVIARK (70 aa)) is the HTH gntR-type domain. Residues 31–50 (QSALAEMYNISRTTVRHILS) constitute a DNA-binding region (H-T-H motif).

In terms of biological role, may be a positive transcriptional regulator for lgoD and/or lgoT. Is essential for growth on L-galactonate as the sole carbon source. This is Probable HTH-type transcriptional regulator LgoR (lgoR) from Escherichia coli (strain K12).